We begin with the raw amino-acid sequence, 354 residues long: MSGNTLGRLFRLTTYGESHGAGLGGVIDGCPAGIALDEAVIQRELDLRRPGGNSASTTRQEPDRVRLLSGVFEGVTTGTPIAFHVENVDQRSRDYGEIARLYRPGHADFTYDAKFGVRDYRGGGRASGRETLSRVAGGAIAQALLARHGIAVRAFTVELGGVPADLVDVAGAQLRPFFSPDPDVVEAWEDMVRTVKGEGDTLGGIVQVEATGVPAGLGEPVFDKLDAVLAYALMSVGAVKGVEVGAGFEAARMHGSDNNDPIVPSGFFTNHAGGILGGISNGETIVLRAAVKPIPSIAQEQITIDRDGKPSALFIAGRHDISAIPRIVPVLKAMTALVLADMLLMQRRMATPQP.

Residue arginine 48 coordinates NADP(+). FMN-binding positions include 125–127, glycine 277, 292–296, and arginine 318; these read RAS and KPIPS.

Belongs to the chorismate synthase family. As to quaternary structure, homotetramer. FMNH2 is required as a cofactor.

The enzyme catalyses 5-O-(1-carboxyvinyl)-3-phosphoshikimate = chorismate + phosphate. It functions in the pathway metabolic intermediate biosynthesis; chorismate biosynthesis; chorismate from D-erythrose 4-phosphate and phosphoenolpyruvate: step 7/7. Functionally, catalyzes the anti-1,4-elimination of the C-3 phosphate and the C-6 proR hydrogen from 5-enolpyruvylshikimate-3-phosphate (EPSP) to yield chorismate, which is the branch point compound that serves as the starting substrate for the three terminal pathways of aromatic amino acid biosynthesis. This reaction introduces a second double bond into the aromatic ring system. The sequence is that of Chorismate synthase from Nitratidesulfovibrio vulgaris (strain DP4) (Desulfovibrio vulgaris).